Here is a 324-residue protein sequence, read N- to C-terminus: Quinolinate synthase (324 aa).

Positions 39 and 56 each coordinate iminosuccinate. Cys-101 provides a ligand contact to [4Fe-4S] cluster. Residues 127–129 (YIN) and Ser-144 contribute to the iminosuccinate site. Cys-187 provides a ligand contact to [4Fe-4S] cluster. Iminosuccinate is bound by residues 213–215 (HPE) and Thr-230. Cys-280 contributes to the [4Fe-4S] cluster binding site.

The protein belongs to the quinolinate synthase family. Type 2 subfamily. Requires [4Fe-4S] cluster as cofactor.

It is found in the cytoplasm. It catalyses the reaction iminosuccinate + dihydroxyacetone phosphate = quinolinate + phosphate + 2 H2O + H(+). The protein operates within cofactor biosynthesis; NAD(+) biosynthesis; quinolinate from iminoaspartate: step 1/1. Catalyzes the condensation of iminoaspartate with dihydroxyacetone phosphate to form quinolinate. This is Quinolinate synthase from Trichormus variabilis (strain ATCC 29413 / PCC 7937) (Anabaena variabilis).